The following is a 135-amino-acid chain: uncharacterized protein (135 aa).

The protein belongs to the transcriptional regulatory CopG/NikR family.

This is an uncharacterized protein from Methanocaldococcus jannaschii (strain ATCC 43067 / DSM 2661 / JAL-1 / JCM 10045 / NBRC 100440) (Methanococcus jannaschii).